Consider the following 1145-residue polypeptide: DNA polymerase subunit gamma-1, mitochondrial (1145 aa).

The N-terminal 9 residues, 1 to 9 (MQFHLIRKY), are a transit peptide targeting the mitochondrion.

It belongs to the DNA polymerase type-A family. As to quaternary structure, component of the DNA polymerase gamma complex consisting of two subunits: the catalytic subunit DNApol-gamma/DNApolG1 and the accessory subunit PolG2/DNApol-gamma35. It depends on Mg(2+) as a cofactor.

The protein resides in the mitochondrion. It carries out the reaction DNA(n) + a 2'-deoxyribonucleoside 5'-triphosphate = DNA(n+1) + diphosphate. Stimulated by KCl, and inhibited by the small molecules o 2',3'-dideoxythymidine 5'-triphosphate (d2TTP) and N-ethylmaleimide (NEM). Functionally, as the catalytic component of the DNA polymerase gamma complex is involved in the replication of mitochondrial DNA (mtDNA). Has both 5'-3' DNA polymerase and a highly mispair-specific 3'-5' exonuclease activity. At the end of mtDNA replication DNA ends are ligated to produce a closed circular mtDNA molecule, its exonuclease activity is required for formation of these ligatable ends by preventing DNA synthesis from continuing past the 5'-end of downstream DNA into duplex DNA regions. Does not possess DNA primase activity, does not catalyze strand displacement synthesis and does not contain a 5'-3' exonuclease activity to catalyze nick translation. Important for promoting the elimination of paternal mitochondrial DNA during spermatogenesis, however its exact role in this function has not yet been identified and appears to be independent of its 3'-5'-exonuclease activity and only partially dependent on its DNA polymerase activity. In Drosophila melanogaster (Fruit fly), this protein is DNA polymerase subunit gamma-1, mitochondrial.